The chain runs to 113 residues: Tubulin alpha chain (113 aa).

Glu52 contacts GTP. Glu52 lines the Mg(2+) pocket.

The protein belongs to the tubulin family. As to quaternary structure, dimer of alpha and beta chains. A typical microtubule is a hollow water-filled tube with an outer diameter of 25 nm and an inner diameter of 15 nM. Alpha-beta heterodimers associate head-to-tail to form protofilaments running lengthwise along the microtubule wall with the beta-tubulin subunit facing the microtubule plus end conferring a structural polarity. Microtubules usually have 13 protofilaments but different protofilament numbers can be found in some organisms and specialized cells. Mg(2+) is required as a cofactor.

The protein resides in the cytoplasm. Its subcellular location is the cytoskeleton. It catalyses the reaction GTP + H2O = GDP + phosphate + H(+). Functionally, tubulin is the major constituent of microtubules, a cylinder consisting of laterally associated linear protofilaments composed of alpha- and beta-tubulin heterodimers. Microtubules grow by the addition of GTP-tubulin dimers to the microtubule end, where a stabilizing cap forms. Below the cap, tubulin dimers are in GDP-bound state, owing to GTPase activity of alpha-tubulin. The chain is Tubulin alpha chain (TUBA) from Picea abies (Norway spruce).